We begin with the raw amino-acid sequence, 143 residues long: MFMGEFRHNIDTKGRMIVPSKLREELGEQFVLTRGLDGCLFGYPMKEWANLETKLNDMPLAKKDARTFVRFFYSAATECELDKQGRINIPSTLRNYAALTKECVVIGVSNRIEIWDEARWQEFSEVAAENFDEIAENMIDFGL.

2 SpoVT-AbrB domains span residues Glu-5–Glu-47 and Ala-76–Arg-119.

This sequence belongs to the MraZ family. As to quaternary structure, forms oligomers.

It is found in the cytoplasm. Its subcellular location is the nucleoid. The protein is Transcriptional regulator MraZ of Enterococcus hirae.